A 447-amino-acid polypeptide reads, in one-letter code: GTPase Der (447 aa).

EngA-type G domains lie at Lys4 to Glu165 and Leu180 to Asn357. GTP-binding positions include Gly10–Ser17, Asp57–Leu61, Asn119–Glu122, Gly186–Ser193, Asp233–Leu237, and Asn298–Asp301. Residues Lys358–Lys443 enclose the KH-like domain.

This sequence belongs to the TRAFAC class TrmE-Era-EngA-EngB-Septin-like GTPase superfamily. EngA (Der) GTPase family. Associates with the 50S ribosomal subunit.

Its function is as follows. GTPase that plays an essential role in the late steps of ribosome biogenesis. This is GTPase Der from Rickettsia typhi (strain ATCC VR-144 / Wilmington).